A 159-amino-acid chain; its full sequence is F1845 fimbrial protein (159 aa).

The N-terminal stretch at 1–21 (MKKLAIMAAASMIFTVGSAQA) is a signal peptide.

The protein belongs to the Dr-adhesin family.

It is found in the fimbrium. Its function is as follows. Hemagglutinins of uropathogenic E.coli mediate adherence to the upper urinary tract. These adhesins bind to the Dr blood group antigen and also agglutinate human erythrocytes in the presence of D-mannose (mannose-resistant hemagglutination (MRHA)). C1845 is a strain responsible for diarrheal disease. This is F1845 fimbrial protein (daaE) from Escherichia coli.